Consider the following 539-residue polypeptide: Bifunctional purine biosynthesis protein PurH (539 aa).

The MGS-like domain occupies 8–159; sequence FPIPDLHRVR…KNYAYTGVVT (152 aa).

Belongs to the PurH family.

The catalysed reaction is (6R)-10-formyltetrahydrofolate + 5-amino-1-(5-phospho-beta-D-ribosyl)imidazole-4-carboxamide = 5-formamido-1-(5-phospho-D-ribosyl)imidazole-4-carboxamide + (6S)-5,6,7,8-tetrahydrofolate. The enzyme catalyses IMP + H2O = 5-formamido-1-(5-phospho-D-ribosyl)imidazole-4-carboxamide. Its pathway is purine metabolism; IMP biosynthesis via de novo pathway; 5-formamido-1-(5-phospho-D-ribosyl)imidazole-4-carboxamide from 5-amino-1-(5-phospho-D-ribosyl)imidazole-4-carboxamide (10-formyl THF route): step 1/1. It functions in the pathway purine metabolism; IMP biosynthesis via de novo pathway; IMP from 5-formamido-1-(5-phospho-D-ribosyl)imidazole-4-carboxamide: step 1/1. The chain is Bifunctional purine biosynthesis protein PurH from Bartonella tribocorum (strain CIP 105476 / IBS 506).